We begin with the raw amino-acid sequence, 314 residues long: Methionyl-tRNA formyltransferase (314 aa).

109 to 112 (SLLP) contributes to the (6S)-5,6,7,8-tetrahydrofolate binding site.

This sequence belongs to the Fmt family.

It catalyses the reaction L-methionyl-tRNA(fMet) + (6R)-10-formyltetrahydrofolate = N-formyl-L-methionyl-tRNA(fMet) + (6S)-5,6,7,8-tetrahydrofolate + H(+). Attaches a formyl group to the free amino group of methionyl-tRNA(fMet). The formyl group appears to play a dual role in the initiator identity of N-formylmethionyl-tRNA by promoting its recognition by IF2 and preventing the misappropriation of this tRNA by the elongation apparatus. The polypeptide is Methionyl-tRNA formyltransferase (Syntrophomonas wolfei subsp. wolfei (strain DSM 2245B / Goettingen)).